The primary structure comprises 282 residues: Phosphatidylglycerol--prolipoprotein diacylglyceryl transferase (282 aa).

A run of 4 helical transmembrane segments spans residues 19–39, 59–79, 90–110, and 120–140; these read IGPI…LIGV, LSIW…VLFQ, IIAI…GTLA, and VPFW…QAIG. R141 is an a 1,2-diacyl-sn-glycero-3-phospho-(1'-sn-glycerol) binding site. The next 3 membrane-spanning stretches (helical) occupy residues 181–201, 212–232, and 245–265; these read TFLY…TLFF, VGTL…WIEG, and IAQV…AWLY.

Belongs to the Lgt family.

The protein resides in the cell inner membrane. It carries out the reaction L-cysteinyl-[prolipoprotein] + a 1,2-diacyl-sn-glycero-3-phospho-(1'-sn-glycerol) = an S-1,2-diacyl-sn-glyceryl-L-cysteinyl-[prolipoprotein] + sn-glycerol 1-phosphate + H(+). It participates in protein modification; lipoprotein biosynthesis (diacylglyceryl transfer). Its function is as follows. Catalyzes the transfer of the diacylglyceryl group from phosphatidylglycerol to the sulfhydryl group of the N-terminal cysteine of a prolipoprotein, the first step in the formation of mature lipoproteins. The chain is Phosphatidylglycerol--prolipoprotein diacylglyceryl transferase from Trichormus variabilis (strain ATCC 29413 / PCC 7937) (Anabaena variabilis).